Here is a 665-residue protein sequence, read N- to C-terminus: MVQLSELASALNQTESKGVFSKHPKGFGFVHPEDATDKTNDIYIGKNDTKFAMDGDKVTVKVTYPKTEKRGASGQITKINERAVVDTVGTYRSLSNRQVKALGYKGRIELYNDRISDTLYIKQPLSGVQEEDVVSLKITQYPTNTKTFEGKITGIIGHKGEVGLDILEVLCAMKIPQEFSSETLAEAEAFSEKLTDSDLQDREDYRNEITYTIDGDDSKDLDDAIHVKKLSNWHFELGVHIADVSHYVTEGSSLDEEAYSRATSVYVTDRVVPMLPVKLSNNLCSLNEAQERLTMSCLMEIDDKGKIVSYKISPSVIKTTYRMTYNNVNKMIHQGQEGHREALENFFKITDSIKVAVELHEILETMRKDRGMIEFDESEAKIILDEKGHPIEIVKRDRDTAERMIESFMLMANETVALDFQKKKLPSLYRVHDNPKEKSFAKLMEAAANAGFSLNSDSHQAINFFADEIKGTSSEKALTYQLRHTMSTAVYSEKNTKHFGLAATNYTHFTSPIRRYPDLIIHRLLHLYPSDHSNHTKDEWKERLPEIASHSSDMEHRAVVTERIIDAMKKAEYMSERIGEVYTGTITGLQKFGIFVALDNTVEGLIRVPNLHTGTTEELEFDEEASIFKGKKSETVYQIGQEIKIRVIAANKRKGTVDFEQIAPE.

One can recognise an RNB domain in the interval 202-528; it reads REDYRNEITY…LIIHRLLHLY (327 aa). In terms of domain architecture, S1 motif spans 579–662; it reads GEVYTGTITG…RKGTVDFEQI (84 aa).

This sequence belongs to the RNR ribonuclease family. RNase R subfamily.

The protein localises to the cytoplasm. The enzyme catalyses Exonucleolytic cleavage in the 3'- to 5'-direction to yield nucleoside 5'-phosphates.. 3'-5' exoribonuclease that releases 5'-nucleoside monophosphates and is involved in maturation of structured RNAs. This chain is Ribonuclease R 2, found in Lactococcus lactis subsp. lactis (strain IL1403) (Streptococcus lactis).